The sequence spans 486 residues: Vacuolar protein sorting-associated protein 73 (486 aa).

At 1 to 26 (MNRILSSASLLSNVSMPRQNKHKITK) the chain is on the cytoplasmic side. Residues 27-47 (ALCYAIIVASIGSIQFGYHLS) traverse the membrane as a helical segment. Residues 48-90 (ELNAPQQVLSCSEFDIPMEGYPYDRTWLGKRGYKQCIPLNDEQ) are Mitochondrial intermembrane-facing. Residues 91 to 111 (IGIVTSVFCIGGILGSYFATS) traverse the membrane as a helical segment. Topologically, residues 112–119 (LANIYGRK) are cytoplasmic. The helical transmembrane segment at 120–140 (FSSLINCTLNIVGSLIIFNSN) threads the bilayer. Residues 141-146 (SYRGLI) lie on the Mitochondrial intermembrane side of the membrane. A helical membrane pass occupies residues 147–167 (IGRILVGISCGSLIVIIPLFI). Residues 168–178 (KEVAPSGWEGL) are Cytoplasmic-facing. The helical transmembrane segment at 179-199 (LGSMTQICIRLGVLLTQGIAL) threads the bilayer. At 200 to 208 (PLTDSYRWR) the chain is on the mitochondrial intermembrane side. Residues 209 to 229 (WILFGSFLIAVLNFFMWFIVD) traverse the membrane as a helical segment. The Cytoplasmic segment spans residues 230 to 305 (ESPKWLLAHG…RDRTNVKSRH (76 aa)). The helical transmembrane segment at 306-326 (VITVLLFGQQFCGINSIVLYG) threads the bilayer. Over 327–342 (TKIISQLYPQHAIRIN) the chain is Mitochondrial intermembrane. Residues 343–363 (FFISMVNVLVTILVSLLIHSL) form a helical membrane-spanning segment. The Cytoplasmic portion of the chain corresponds to 364 to 366 (PRK). A helical transmembrane segment spans residues 367–387 (PLLMTSTVLVSVTAFIMGIAM). Over 388-396 (NHNKMNLLI) the chain is Mitochondrial intermembrane. A helical membrane pass occupies residues 397 to 417 (VFSFIYMGVFTMGLNPLPFII). The Cytoplasmic portion of the chain corresponds to 418-432 (MREVSKPQDMVLAQR). The helical transmembrane segment at 433-453 (YGTICNWVGTFIIAYTFPIIH) threads the bilayer. Asp-454 is a topological domain (mitochondrial intermembrane). A helical transmembrane segment spans residues 455-475 (VLSGYVFIIFAIIACSISAFI). Residues 476–486 (WKKVPETKRSG) lie on the Cytoplasmic side of the membrane.

It belongs to the major facilitator superfamily. Sugar transporter (TC 2.A.1.1) family.

It is found in the mitochondrion membrane. Functionally, may be involved in vacuolar protein sorting. In Saccharomyces cerevisiae (strain ATCC 204508 / S288c) (Baker's yeast), this protein is Vacuolar protein sorting-associated protein 73 (VPS73).